A 620-amino-acid chain; its full sequence is Glutathione-regulated potassium-efflux system protein KefC (620 aa).

Helical transmembrane passes span 4–24 (HTLIQALIYLGSAALIVPIAV), 26–46 (LGLGSVLGYLIAGCIIGPWGL), 54–74 (SILHFAEIGVVLMLFIIGLEL), 90–110 (GALQMVICGGLLGLFCMLLGL), 114–134 (VAELIGMTLALSSTAIAMQAM), 149–169 (FAVLLFQDIAAIPLVAMIPLL), 178–198 (MGAFVLSALKVAGALVLVVLL), 218–238 (VFSAVALFLVFGFGLLLEEVG), 270–290 (GLLLGLFFIGVGMSIDFGTLL), 294–314 (LRIVILLLGFLIIKIAMLWLI), 327–347 (WFAVLLGQGSEFAFVVFGAAQ), and 359–379 (SLTLAVALSMAATPILLVILN). One can recognise an RCK N-terminal domain in the interval 399-518 (QPRVIIAGFG…AGVEKPERET (120 aa)). Residues 597-620 (GWQGTEEGKHTGNMADEPETKPSS) form a disordered region.

This sequence belongs to the monovalent cation:proton antiporter 2 (CPA2) transporter (TC 2.A.37) family. KefC subfamily. Homodimer. Interacts with the regulatory subunit KefF.

The protein resides in the cell inner membrane. Functionally, pore-forming subunit of a potassium efflux system that confers protection against electrophiles. Catalyzes K(+)/H(+) antiport. This chain is Glutathione-regulated potassium-efflux system protein KefC, found in Escherichia coli O127:H6 (strain E2348/69 / EPEC).